Consider the following 140-residue polypeptide: uncharacterized protein (140 aa).

This is an uncharacterized protein from Homo sapiens (Human).